The primary structure comprises 729 residues: Isocitrate dehydrogenase [NADP] (729 aa).

NADP(+)-binding residues include N83 and S85. Residues S121, N124, R128, R134, and K244 each coordinate D-threo-isocitrate. NADP(+) is bound at residue N124. Residue D337 coordinates Mg(2+). Y407 and R534 together coordinate D-threo-isocitrate. The Mg(2+) site is built by D535 and D539. NADP(+)-binding residues include S572, H576, R587, D589, and R636.

This sequence belongs to the monomeric-type IDH family. As to quaternary structure, monomer. Requires Mg(2+) as cofactor. The cofactor is Mn(2+).

It catalyses the reaction D-threo-isocitrate + NADP(+) = 2-oxoglutarate + CO2 + NADPH. Catalyzes the oxidative decarboxylation of isocitrate to 2-oxoglutarate and carbon dioxide with the concomitant reduction of NADP(+). The sequence is that of Isocitrate dehydrogenase [NADP] from Corynebacterium efficiens (strain DSM 44549 / YS-314 / AJ 12310 / JCM 11189 / NBRC 100395).